Reading from the N-terminus, the 362-residue chain is Peptide chain release factor 1 (362 aa).

The residue at position 237 (Gln237) is an N5-methylglutamine. Over residues 282–296 the composition is skewed to basic and acidic residues; the sequence is QQEEDKRRAEADSTR. The interval 282–304 is disordered; that stretch reads QQEEDKRRAEADSTRRSILSTGD.

It belongs to the prokaryotic/mitochondrial release factor family. Post-translationally, methylated by PrmC. Methylation increases the termination efficiency of RF1.

It is found in the cytoplasm. Peptide chain release factor 1 directs the termination of translation in response to the peptide chain termination codons UAG and UAA. This Tolumonas auensis (strain DSM 9187 / NBRC 110442 / TA 4) protein is Peptide chain release factor 1.